The primary structure comprises 150 residues: MRAVVQRVSKSYVNVNGEKVGEINQGLNVLLGVEDGDGEDDIKYLVDKIVNLRIFEDDQGKMNLSVNDIGGELLVISQFTLLGDCRKGRRPNFMKAASPEIADELYQKFVEKVSKDYGLSLATGSFKEHMEVDILNDGPVTILLDSNKKF.

The Gly-cisPro motif, important for rejection of L-amino acids motif lies at 138–139; sequence GP.

This sequence belongs to the DTD family. As to quaternary structure, homodimer.

It is found in the cytoplasm. It catalyses the reaction glycyl-tRNA(Ala) + H2O = tRNA(Ala) + glycine + H(+). It carries out the reaction a D-aminoacyl-tRNA + H2O = a tRNA + a D-alpha-amino acid + H(+). In terms of biological role, an aminoacyl-tRNA editing enzyme that deacylates mischarged D-aminoacyl-tRNAs. Also deacylates mischarged glycyl-tRNA(Ala), protecting cells against glycine mischarging by AlaRS. Acts via tRNA-based rather than protein-based catalysis; rejects L-amino acids rather than detecting D-amino acids in the active site. By recycling D-aminoacyl-tRNA to D-amino acids and free tRNA molecules, this enzyme counteracts the toxicity associated with the formation of D-aminoacyl-tRNA entities in vivo and helps enforce protein L-homochirality. The sequence is that of D-aminoacyl-tRNA deacylase from Natranaerobius thermophilus (strain ATCC BAA-1301 / DSM 18059 / JW/NM-WN-LF).